The primary structure comprises 256 residues: MDITPALTEMELDHKPTCETVPGLPQKKHYRQRAHSNPHSDHDIEYPLTPNHMDWTKYYGDYTKGRQVDFADIGCGYGGLLMRLSPKYPDNLMIGMEIRVKVSDYVNEKIQALRKHHAEAGHYRNVAVLRSNAMKYMPNYFHKGQLSKMFFLFPDPHFKNKKHKWRIITPTLLSEYAYVLREGGIIYTITDVKDLHEWMVKHLSEHPLFERLTEEEMKKDPIVEMLFESTEEGQKVTRNDGGKWPAIFRRLPNPAL.

The disordered stretch occupies residues 17–45 (TCETVPGLPQKKHYRQRAHSNPHSDHDIE). Residues 26–36 (QKKHYRQRAHS) are compositionally biased toward basic residues. Residues Gly74, 97–98 (EI), 132–133 (NA), and Leu152 each bind S-adenosyl-L-methionine. Residue Asp155 is part of the active site. 230–232 (TEE) contributes to the S-adenosyl-L-methionine binding site.

This sequence belongs to the class I-like SAM-binding methyltransferase superfamily. TrmB family.

The protein resides in the nucleus. The enzyme catalyses guanosine(46) in tRNA + S-adenosyl-L-methionine = N(7)-methylguanosine(46) in tRNA + S-adenosyl-L-homocysteine. The protein operates within tRNA modification; N(7)-methylguanine-tRNA biosynthesis. Catalyzes the formation of N(7)-methylguanine at position 46 (m7G46) in tRNA. The chain is tRNA (guanine-N(7)-)-methyltransferase from Caenorhabditis elegans.